Reading from the N-terminus, the 71-residue chain is Plasticin-C2 (71 aa).

Positions 1-22 (MAFLKKSLLLVLFLALVPLSIC) are cleaved as a signal peptide. The propeptide occupies 23–45 (EEEKREEEDEEKQEDDDQSENKR). A disordered region spans residues 25-46 (EKREEEDEEKQEDDDQSENKRG). Residues 26–40 (KREEEDEEKQEDDDQ) are compositionally biased toward acidic residues. At asparagine 68 the chain carries Asparagine amide. Residues 70 to 71 (ES) constitute a propeptide that is removed on maturation.

This sequence belongs to the frog skin active peptide (FSAP) family. Plasticin subfamily. As to expression, expressed by the skin glands.

The protein localises to the secreted. It localises to the target cell membrane. Functionally, neutral peptide with no antimicrobial activity. May act in synergy with cationic peptides by enhancing their activity. Has a moderate hemolytic activity. The polypeptide is Plasticin-C2 (Agalychnis callidryas (Red-eyed tree frog)).